We begin with the raw amino-acid sequence, 256 residues long: Astacin-like metalloprotease toxin 2 (256 aa).

A signal peptide spans 1–24 (MIPDVGFLVLLTGALFICIKAAPA). Residues 25–52 (TTDVDPTFEGRIVMEGDILIREEQLTER) constitute a propeptide that is removed on maturation. The region spanning 53–250 (NAIALENMRW…KKINTLYNCP (198 aa)) is the Peptidase M12A domain. 2 disulfide bridges follow: Cys-94–Cys-249 and Cys-117–Cys-136. His-144 is a Zn(2+) binding site. Glu-145 is a catalytic residue. Zn(2+)-binding residues include His-148 and His-154.

As to quaternary structure, monomer. Requires Zn(2+) as cofactor. As to expression, expressed by the venom gland.

It localises to the secreted. Inhibited by 1,10-phenanthroline. Zinc metalloprotease. Provoques deadhesion of endothelial cells from cell cultures, and also degradation of fibronectin, fibrinogen and gelatin in vitro. Its role in the venom is not fully understood but it might act as a spreading factor that facilitates diffusion of other venom toxins. Alternatively, it might be involved in the proteolytic processing of other venom toxins or it might play a role in extra-oral digestion of prey. The polypeptide is Astacin-like metalloprotease toxin 2 (Loxosceles intermedia (Brown spider)).